The chain runs to 375 residues: Succinyl-diaminopimelate desuccinylase (375 aa).

His-66 lines the Zn(2+) pocket. Residue Asp-68 is part of the active site. Asp-99 provides a ligand contact to Zn(2+). Glu-133 (proton acceptor) is an active-site residue. Residues Glu-134, Glu-162, and His-348 each contribute to the Zn(2+) site.

Belongs to the peptidase M20A family. DapE subfamily. In terms of assembly, homodimer. Requires Zn(2+) as cofactor. The cofactor is Co(2+).

It catalyses the reaction N-succinyl-(2S,6S)-2,6-diaminopimelate + H2O = (2S,6S)-2,6-diaminopimelate + succinate. The protein operates within amino-acid biosynthesis; L-lysine biosynthesis via DAP pathway; LL-2,6-diaminopimelate from (S)-tetrahydrodipicolinate (succinylase route): step 3/3. Functionally, catalyzes the hydrolysis of N-succinyl-L,L-diaminopimelic acid (SDAP), forming succinate and LL-2,6-diaminopimelate (DAP), an intermediate involved in the bacterial biosynthesis of lysine and meso-diaminopimelic acid, an essential component of bacterial cell walls. The protein is Succinyl-diaminopimelate desuccinylase of Escherichia coli O139:H28 (strain E24377A / ETEC).